The following is a 341-amino-acid chain: Anthranilate phosphoribosyltransferase (341 aa).

Residues glycine 83, serine 91, 93–96 (NTST), 111–115 (KHGNR), and serine 123 each bind 5-phospho-alpha-D-ribose 1-diphosphate. Glycine 83 contributes to the anthranilate binding site. Serine 95 provides a ligand contact to Mg(2+). Position 114 (asparagine 114) interacts with anthranilate. Arginine 169 is a binding site for anthranilate. Residues aspartate 228 and glutamate 229 each coordinate Mg(2+).

This sequence belongs to the anthranilate phosphoribosyltransferase family. In terms of assembly, homodimer. Mg(2+) serves as cofactor.

The catalysed reaction is N-(5-phospho-beta-D-ribosyl)anthranilate + diphosphate = 5-phospho-alpha-D-ribose 1-diphosphate + anthranilate. The protein operates within amino-acid biosynthesis; L-tryptophan biosynthesis; L-tryptophan from chorismate: step 2/5. Catalyzes the transfer of the phosphoribosyl group of 5-phosphorylribose-1-pyrophosphate (PRPP) to anthranilate to yield N-(5'-phosphoribosyl)-anthranilate (PRA). The chain is Anthranilate phosphoribosyltransferase from Hyphomonas neptunium (strain ATCC 15444).